Reading from the N-terminus, the 316-residue chain is Glutathione synthetase (316 aa).

Positions 124–311 (NEKLAALLFP…IAGLLFDAIE (188 aa)) constitute an ATP-grasp domain. 151 to 208 (FVLEHGQAVLKPLDGMGGRSIFRSGSGDPNLNVILETLTDGNRKLTLAQRFIPDITAG) serves as a coordination point for ATP. Mg(2+) contacts are provided by glutamate 282 and asparagine 284.

It belongs to the prokaryotic GSH synthase family. Mg(2+) serves as cofactor. Requires Mn(2+) as cofactor.

It catalyses the reaction gamma-L-glutamyl-L-cysteine + glycine + ATP = glutathione + ADP + phosphate + H(+). It functions in the pathway sulfur metabolism; glutathione biosynthesis; glutathione from L-cysteine and L-glutamate: step 2/2. This is Glutathione synthetase from Xanthomonas axonopodis pv. citri (strain 306).